The chain runs to 370 residues: Anhydro-N-acetylmuramic acid kinase (370 aa).

12–19 contacts ATP; it reads GTSLDGVD.

It belongs to the anhydro-N-acetylmuramic acid kinase family.

The enzyme catalyses 1,6-anhydro-N-acetyl-beta-muramate + ATP + H2O = N-acetyl-D-muramate 6-phosphate + ADP + H(+). It functions in the pathway amino-sugar metabolism; 1,6-anhydro-N-acetylmuramate degradation. Its pathway is cell wall biogenesis; peptidoglycan recycling. Catalyzes the specific phosphorylation of 1,6-anhydro-N-acetylmuramic acid (anhMurNAc) with the simultaneous cleavage of the 1,6-anhydro ring, generating MurNAc-6-P. Is required for the utilization of anhMurNAc either imported from the medium or derived from its own cell wall murein, and thus plays a role in cell wall recycling. In Pectobacterium carotovorum subsp. carotovorum (strain PC1), this protein is Anhydro-N-acetylmuramic acid kinase.